Reading from the N-terminus, the 146-residue chain is Large ribosomal subunit protein uL15 (146 aa).

Over residues 1–13 (MKLHELKPAEGSR) the composition is skewed to basic and acidic residues. The tract at residues 1–51 (MKLHELKPAEGSRKVRNRVGRGIGSGNGKTAGKGHKGQNARSGGGVRLGFE) is disordered. 2 stretches are compositionally biased toward gly residues: residues 21–31 (RGIGSGNGKTA) and 42–51 (SGGGVRLGFE).

The protein belongs to the universal ribosomal protein uL15 family. As to quaternary structure, part of the 50S ribosomal subunit.

Functionally, binds to the 23S rRNA. This Bacillus cereus (strain G9842) protein is Large ribosomal subunit protein uL15.